The sequence spans 383 residues: 3-dehydroquinate synthase (383 aa).

Residues 81 to 86 (EGEVSK), 115 to 119 (GVVGD), 139 to 140 (TS), K152, and K161 contribute to the NAD(+) site. E194, H256, and H274 together coordinate Zn(2+).

The protein belongs to the sugar phosphate cyclases superfamily. Dehydroquinate synthase family. Requires Co(2+) as cofactor. Zn(2+) is required as a cofactor. NAD(+) serves as cofactor.

It localises to the cytoplasm. It catalyses the reaction 7-phospho-2-dehydro-3-deoxy-D-arabino-heptonate = 3-dehydroquinate + phosphate. Its pathway is metabolic intermediate biosynthesis; chorismate biosynthesis; chorismate from D-erythrose 4-phosphate and phosphoenolpyruvate: step 2/7. Functionally, catalyzes the conversion of 3-deoxy-D-arabino-heptulosonate 7-phosphate (DAHP) to dehydroquinate (DHQ). The polypeptide is 3-dehydroquinate synthase (Nitrobacter hamburgensis (strain DSM 10229 / NCIMB 13809 / X14)).